The primary structure comprises 66 residues: Disk-determining factor A (66 aa).

Its function is as follows. Involved in cell-shape determination. Required for the formation of disks. This is Disk-determining factor A from Haloferax volcanii (strain ATCC 29605 / DSM 3757 / JCM 8879 / NBRC 14742 / NCIMB 2012 / VKM B-1768 / DS2) (Halobacterium volcanii).